We begin with the raw amino-acid sequence, 273 residues long: Undecaprenyl-diphosphatase (273 aa).

A run of 6 helical transmembrane segments spans residues 46 to 63 (LFEVVIQSGAILAVCWEY), 83 to 103 (FVLNLIIAFLPAGIVGFLAGK), 109 to 129 (LFNSTTVTTTFILGGLIILWV), 184 to 204 (ATEFSFFLAIPTLFIATAYDL), 218 to 238 (AFGIGFAAAFVSAFLAVRGLL), and 249 to 269 (FAWYRIAFGLVVLSTAHYGLV).

It belongs to the UppP family.

It is found in the cell inner membrane. The enzyme catalyses di-trans,octa-cis-undecaprenyl diphosphate + H2O = di-trans,octa-cis-undecaprenyl phosphate + phosphate + H(+). Catalyzes the dephosphorylation of undecaprenyl diphosphate (UPP). Confers resistance to bacitracin. This Methylococcus capsulatus (strain ATCC 33009 / NCIMB 11132 / Bath) protein is Undecaprenyl-diphosphatase.